A 144-amino-acid polypeptide reads, in one-letter code: Small ribosomal subunit protein eS17 (144 aa).

Belongs to the eukaryotic ribosomal protein eS17 family.

This is Small ribosomal subunit protein eS17 (RPS17) from Solanum lycopersicum (Tomato).